The primary structure comprises 215 residues: 2-phospho-L-lactate guanylyltransferase (215 aa).

Belongs to the CofC family. As to quaternary structure, homodimer.

It catalyses the reaction (2S)-2-phospholactate + GTP + H(+) = (2S)-lactyl-2-diphospho-5'-guanosine + diphosphate. Its pathway is cofactor biosynthesis; coenzyme F420 biosynthesis. In terms of biological role, guanylyltransferase that catalyzes the activation of (2S)-2-phospholactate (2-PL) as (2S)-lactyl-2-diphospho-5'-guanosine, via the condensation of 2-PL with GTP. It is involved in the biosynthesis of coenzyme F420, a hydride carrier cofactor. In Methanoculleus marisnigri (strain ATCC 35101 / DSM 1498 / JR1), this protein is 2-phospho-L-lactate guanylyltransferase.